The chain runs to 1000 residues: ATP-dependent DNA/RNA helicase DHX36 (1000 aa).

The segment at 1–43 is required for recruitment to cytoplasmic stress granules; the sequence is MSYDYHQSWSRDGGPRGSGQGSGGGGGGSRGSGGGGGGRGGRG. Positions 1–53 are disordered; sequence MSYDYHQSWSRDGGPRGSGQGSGGGGGGSRGSGGGGGGRGGRGRHPAHLKGRE. The interval 1–96 is required for the pre-miR-134 transport; the sequence is MSYDYHQSWS…IVQLLNSVQA (96 aa). A necessary for nuclear and nucleolar caps localizations region spans residues 1-192; that stretch reads MSYDYHQSWS…KKTDPRYIEM (192 aa). Residues 15–40 are compositionally biased toward gly residues; the sequence is PRGSGQGSGGGGGGSRGSGGGGGGRG. The DSM (DHX36-specific motif) stretch occupies residues 45-67; it reads HPAHLKGREIGLWYAKKQTQKNK. The tract at residues 45–97 is required for G4-DNA- and G4-RNA-binding; that stretch reads HPAHLKGREIGLWYAKKQTQKNKEAERQERAVVHMDERREEQIVQLLNSVQAK. 2 recA-like domain regions span residues 98 to 378 and 379 to 620; these read NDKD…MIHI and PGFT…DYQL. Serine 153 carries the post-translational modification Phosphoserine. Residues 209-379 form the Helicase ATP-binding domain; that stretch reads VNLINNHQVT…FGNCPMIHIP (171 aa). Position 225 to 230 (225 to 230) interacts with ATP; sequence GCGKTT. Residues 257 to 309 are necessary for interaction with single-stranded DNA at the 3'-end of the G4-DNA structure; the sequence is RRISAISVAERVAAERAESCGNGNSTGYQIRLQSRLPRKQGSILYCTTGIILQ. The DEAH box signature appears at 326 to 329; sequence DEIH. Residues glutamate 327 and histidine 329 each coordinate Mg(2+). Residues 469–639 form the Helicase C-terminal domain; that stretch reads ALIRYIVLEE…ELCLQIKILR (171 aa). The interval 490–549 is necessary for interaction with single-stranded DNA at the 3'-end of the G4-DNA structure; sequence WDNISTLHDLLMSQVMFKSDRFLIIPLHSLMPTVNQTQVFKKTPPGVRKIVIATNIAETS. The Nuclear localization signal motif lies at 509–520; sequence DRFLIIPLHSLM. Residues serine 549 and 594 to 597 contribute to the ATP site; that span reads RAGR. A WH domain region spans residues 621 to 690; that stretch reads PEILRTPLEE…LGVHLARLPV (70 aa). Necessary for interaction with single-stranded DNA at the 3'-end of the G4-DNA structure regions lie at residues 630–689, 841–852, and 862–892; these read ELCL…ARLP, NLGKKRKMVKVH, and HPKSVNVEQTDFHYNWLIYHLKMRTSSIYLY. The OB-fold-like subdomains stretch occupies residues 833–897; it reads PKVAKIRLNL…SIYLYDCTEV (65 aa). Lysine 939 carries the N6-acetyllysine modification.

As to quaternary structure, found in a multi-helicase-TICAM1 complex at least composed of DHX36, DDX1, DDX21 and TICAM1; this complex exists in resting cells with or without dsRNA poly(I:C) ligand stimulation. Interacts (via C-terminus) with TICAM1 (via TIR domain). Interacts (via C-terminus) with DDX21; this interaction serves as bridges to TICAM1. Interacts with TERT; this interaction is dependent on the ability of DHX36 to bind to the G-quadruplex RNA (G4-RNA) structure present in the telomerase RNA template component (TERC). Interacts with DKC1; this interaction is dependent on the ability of DHX36 to bind to the G4-RNA structure present in TERC. Interacts with PARN; this interaction stimulates PARN to enhance uPA mRNA decay. Interacts with EXOSC3; this interaction occurs in a RNase-insensitive manner. Interacts with EXOSC10; this interaction occurs in a RNase-insensitive manner. Interacts with ILF3; this interaction occurs in a RNA-dependent manner. Interacts with ELAVL1; this interaction occurs in an RNA-dependent manner. Interacts with DDX5; this interaction occurs in a RNA-dependent manner. Interacts with DDX17; this interaction occurs in a RNA-dependent manner. Interacts with HDAC1; this interaction occurs in a RNA-dependent manner. Interacts with HDAC3; this interaction occurs in a RNA-dependent manner. Interacts with HDAC4. Interacts with AGO1. Interacts with AGO2. Interacts with ERCC6. Requires Mg(2+) as cofactor.

The protein localises to the nucleus. It is found in the cytoplasm. Its subcellular location is the cytosol. It localises to the stress granule. The protein resides in the nucleus speckle. The protein localises to the chromosome. It is found in the telomere. Its subcellular location is the mitochondrion. It localises to the perikaryon. The protein resides in the cell projection. The protein localises to the dendrite. It is found in the axon. The catalysed reaction is ATP + H2O = ADP + phosphate + H(+). Its activity is regulated as follows. ATPase activity is enhanced in the presence of homomeric poly(U) RNAs, but not by double-stranded DNA (dsDNA), double-stranded RNA (dsRNA) and tRNA. Functionally, multifunctional ATP-dependent helicase that unwinds G-quadruplex (G4) structures. Plays a role in many biological processes such as genomic integrity, gene expression regulations and as a sensor to initiate antiviral responses. G4 structures correspond to helical structures containing guanine tetrads. Binds with high affinity to and unwinds G4 structures that are formed in nucleic acids (G4-DNA and G4-RNA). Plays a role in genomic integrity. Converts the G4-RNA structure present in telomerase RNA template component (TREC) into a double-stranded RNA to promote P1 helix formation that acts as a template boundary ensuring accurate reverse transcription. Plays a role in transcriptional regulation. Resolves G4-DNA structures in promoters of genes, such as YY1, KIT/c-kit and ALPL and positively regulates their expression. Plays a role in post-transcriptional regulation. Unwinds a G4-RNA structure located in the 3'-UTR polyadenylation site of the pre-mRNA TP53 and stimulates TP53 pre-mRNA 3'-end processing in response to ultraviolet (UV)-induced DNA damage. Binds to the precursor-microRNA-134 (pre-miR-134) terminal loop and regulates its transport into the synapto-dendritic compartment. Involved in the pre-miR-134-dependent inhibition of target gene expression and the control of dendritic spine size. Plays a role in the regulation of cytoplasmic mRNA translation and mRNA stability. Binds to both G4-RNA structures and alternative non-quadruplex-forming sequence within the 3'-UTR of the PITX1 mRNA regulating negatively PITX1 protein expression. Binds to both G4-RNA structure in the 5'-UTR and AU-rich elements (AREs) localized in the 3'-UTR of NKX2-5 mRNA to either stimulate protein translation or induce mRNA decay in an ELAVL1-dependent manner, respectively. Also binds to ARE sequences present in several mRNAs mediating exosome-mediated 3'-5' mRNA degradation. Involved in cytoplasmic urokinase-type plasminogen activator (uPA) mRNA decay. Component of a multi-helicase-TICAM1 complex that acts as a cytoplasmic sensor of viral double-stranded RNA (dsRNA) and plays a role in the activation of a cascade of antiviral responses including the induction of pro-inflammatory cytokines via the adapter molecule TICAM1. Required for the early embryonic development and hematopoiesis. Involved in the regulation of cardioblast differentiation and proliferation during heart development. Involved in spermatogonia differentiation. May play a role in ossification. This is ATP-dependent DNA/RNA helicase DHX36 from Rattus norvegicus (Rat).